The primary structure comprises 192 residues: Mitochondrial import inner membrane translocase subunit Tim22 (192 aa).

Disulfide bonds link cysteine 67-cysteine 139 and cysteine 158-cysteine 177. 3 helical membrane passes run 72–92 (VLAC…TAGI), 123–141 (YAKN…ECLV), and 168–188 (AGVK…AAID).

Belongs to the Tim17/Tim22/Tim23 family. Component of the TIM22 complex, whose core is composed of TIMM22, associated with peripheral protein FXC1/TIMM10B and the 70 kDa heterohexamer. In most cases, the 70 kDa complex is composed of TIMM9 and TIMM10 (TIMM10A or TIMM10B). A small fraction of the 70 kDa complex is composed of TIMM8 (TIMM8A/DDP1 or TIMM8B/DDP2) and TIMM13. The TIM22 complex also contains AGK and TIMM29. Interacts directly with TIMM9, TIMM10A and FXC1/TIMM10B. Interacts (when oxidized) with TIMM29; interaction is direct. In terms of processing, disulfide bonds promote efficient assembly of the TIM22 complex.

The protein localises to the mitochondrion inner membrane. In terms of biological role, essential core component of the TIM22 complex, a complex that mediates the import and insertion of multi-pass transmembrane proteins into the mitochondrial inner membrane. In the TIM22 complex, it constitutes the voltage-activated and signal-gated channel. Forms a twin-pore translocase that uses the membrane potential as external driving force in 2 voltage-dependent steps. This is Mitochondrial import inner membrane translocase subunit Tim22 (Timm22) from Rattus norvegicus (Rat).